Here is a 96-residue protein sequence, read N- to C-terminus: Large ribosomal subunit protein bL25 (96 aa).

The protein belongs to the bacterial ribosomal protein bL25 family. As to quaternary structure, part of the 50S ribosomal subunit; part of the 5S rRNA/L5/L18/L25 subcomplex. Contacts the 5S rRNA. Binds to the 5S rRNA independently of L5 and L18.

Its function is as follows. This is one of the proteins that binds to the 5S RNA in the ribosome where it forms part of the central protuberance. The protein is Large ribosomal subunit protein bL25 of Francisella philomiragia subsp. philomiragia (strain ATCC 25017 / CCUG 19701 / FSC 153 / O#319-036).